A 328-amino-acid polypeptide reads, in one-letter code: Putative P2Y purinoceptor 10 (328 aa).

Residues 1–27 (MGSNSTSSAESNCNATYLPFQYSLYAT) are Extracellular-facing. N-linked (GlcNAc...) asparagine glycans are attached at residues N4 and N14. Residues 28-48 (TYIFIFIPGLLANSAALWVLC) form a helical membrane-spanning segment. At 49 to 56 (RFISKKNK) the chain is on the cytoplasmic side. The helical transmembrane segment at 57–77 (AIIFMINLSVADLAHILSLPL) threads the bilayer. Residues 78–91 (RIYYYINRHWPFQR) are Extracellular-facing. The chain crosses the membrane as a helical span at residues 92–112 (ALCLLCFYLKYLNMYASIFFL). C94 and C170 form a disulfide bridge. The Cytoplasmic portion of the chain corresponds to 113–137 (TCISLQRCLFLLKPFRARNWKRRYD). The helical transmembrane segment at 138–158 (VGISAVIWIVVGTACLPFPIL) threads the bilayer. The Extracellular segment spans residues 159 to 182 (RNAGLANSTDSCFADLGYKQMDAV). The helical transmembrane segment at 183–203 (VLVTMVVIAELAGFVIPVITI) threads the bilayer. Topologically, residues 204–233 (ACCTWKTTVSLKHPPIAFQGISERKKALRM) are cytoplasmic. Residues 234 to 254 (VFMCAAVFVICFTPYHINFIF) traverse the membrane as a helical segment. Over 255 to 277 (YTMVKESIITSCPTVKSTLYFHP) the chain is Extracellular. The helical transmembrane segment at 278–298 (FSLCLASLCCLLDPILYYFMA) threads the bilayer. The Cytoplasmic portion of the chain corresponds to 299–328 (SEFRDQLSRHGSSVTRSRLMSRESGSSMVN).

Belongs to the G-protein coupled receptor 1 family.

Its subcellular location is the cell membrane. Putative receptor for purines coupled to G-proteins. The sequence is that of Putative P2Y purinoceptor 10 (P2ry10) from Mus musculus (Mouse).